Reading from the N-terminus, the 132-residue chain is Large ribosomal subunit protein bL17 (132 aa).

Belongs to the bacterial ribosomal protein bL17 family. Part of the 50S ribosomal subunit. Contacts protein L32.

The chain is Large ribosomal subunit protein bL17 from Cellvibrio japonicus (strain Ueda107) (Pseudomonas fluorescens subsp. cellulosa).